The following is a 380-amino-acid chain: Cytochrome b (380 aa).

A run of 4 helical transmembrane segments spans residues 33-53 (FGSL…FLAM), 77-98 (WLIR…FIHV), 113-133 (WNIG…GYVL), and 178-198 (FFAF…VHLL). Heme b is bound by residues His-83 and His-97. Heme b contacts are provided by His-182 and His-196. An a ubiquinone-binding site is contributed by His-201. 4 consecutive transmembrane segments (helical) span residues 226-246 (IKDL…VLFF), 288-308 (LGGV…PLLN), 320-340 (ITQA…WIGG), and 347-367 (FTLI…IFMP).

It belongs to the cytochrome b family. As to quaternary structure, the cytochrome bc1 complex contains 11 subunits: 3 respiratory subunits (MT-CYB, CYC1 and UQCRFS1), 2 core proteins (UQCRC1 and UQCRC2) and 6 low-molecular weight proteins (UQCRH/QCR6, UQCRB/QCR7, UQCRQ/QCR8, UQCR10/QCR9, UQCR11/QCR10 and a cleavage product of UQCRFS1). This cytochrome bc1 complex then forms a dimer. Requires heme b as cofactor.

It is found in the mitochondrion inner membrane. Component of the ubiquinol-cytochrome c reductase complex (complex III or cytochrome b-c1 complex) that is part of the mitochondrial respiratory chain. The b-c1 complex mediates electron transfer from ubiquinol to cytochrome c. Contributes to the generation of a proton gradient across the mitochondrial membrane that is then used for ATP synthesis. In Rhipidomys wetzeli (Wetzel's climbing mouse), this protein is Cytochrome b (MT-CYB).